A 466-amino-acid polypeptide reads, in one-letter code: MNKTLYEKIYDSHVVHSEKNGLSILYVDLHLLHEVTSPQAFESLRIKDRTVRQPKKTFATMDHNVSTESKDINASGSMAKIQMQQLIKNCKEFHISLYDLNHPNQGIVHVISPEQGMTLPGMVIVCGDSHTSTHGAFGALSFGIGTSEVEHVLATQTLKQQRFKNMKIEVIGKIGNFITAKDVILYIIGKIGSSAGTGYIIEFCGNVIKKMSMEERMTVCNMAIELGAKSGLIAPDETTYLYLKNKTYSPHGRNWQKAIEYWKTLKTDHNAIFDKVFTIDISNILPQVTWGTNPDQVIGINEKIPDFTSFQNIVKKDLAKSACKYMDLKPGTYLTDITIDKVFIGSCTNSRIEDLRSASKILKHNKISKNVKAIVVPGSGLVKRQAESEGLDKIFIEAGFEWRLPGCSMCLGMNNDRLSENERCASTSNRNFEGRQGRNGRTHLVSPIMAALAALYGKFSNPNKLN.

[4Fe-4S] cluster is bound by residues cysteine 347, cysteine 407, and cysteine 410.

The protein belongs to the aconitase/IPM isomerase family. LeuC type 1 subfamily. Heterodimer of LeuC and LeuD. Requires [4Fe-4S] cluster as cofactor.

It catalyses the reaction (2R,3S)-3-isopropylmalate = (2S)-2-isopropylmalate. Its pathway is amino-acid biosynthesis; L-leucine biosynthesis; L-leucine from 3-methyl-2-oxobutanoate: step 2/4. Catalyzes the isomerization between 2-isopropylmalate and 3-isopropylmalate, via the formation of 2-isopropylmaleate. This is 3-isopropylmalate dehydratase large subunit from Buchnera aphidicola subsp. Diuraphis noxia.